Reading from the N-terminus, the 409-residue chain is Probable peptidoglycan glycosyltransferase FtsW (409 aa).

Transmembrane regions (helical) follow at residues 42-62 (LFTL…SASL), 72-92 (PFHF…VMLA), 108-128 (LLLL…EVNG), 135-155 (VGPI…IYMA), 178-198 (LLFI…VVVL), 213-233 (LWQF…LIIV), 303-323 (FLGV…ALII), 337-357 (YLAY…IGVA), and 368-388 (LPLV…VGLL).

This sequence belongs to the SEDS family. FtsW subfamily.

Its subcellular location is the cell inner membrane. The catalysed reaction is [GlcNAc-(1-&gt;4)-Mur2Ac(oyl-L-Ala-gamma-D-Glu-L-Lys-D-Ala-D-Ala)](n)-di-trans,octa-cis-undecaprenyl diphosphate + beta-D-GlcNAc-(1-&gt;4)-Mur2Ac(oyl-L-Ala-gamma-D-Glu-L-Lys-D-Ala-D-Ala)-di-trans,octa-cis-undecaprenyl diphosphate = [GlcNAc-(1-&gt;4)-Mur2Ac(oyl-L-Ala-gamma-D-Glu-L-Lys-D-Ala-D-Ala)](n+1)-di-trans,octa-cis-undecaprenyl diphosphate + di-trans,octa-cis-undecaprenyl diphosphate + H(+). It functions in the pathway cell wall biogenesis; peptidoglycan biosynthesis. Its function is as follows. Peptidoglycan polymerase that is essential for cell division. This Idiomarina loihiensis (strain ATCC BAA-735 / DSM 15497 / L2-TR) protein is Probable peptidoglycan glycosyltransferase FtsW.